The chain runs to 414 residues: Probable serine/threonine-protein kinase CHK1 homolog (414 aa).

Residues 4 to 255 (YELQETLASG…VSTVMKDPWV (252 aa)) form the Protein kinase domain. ATP contacts are provided by residues 10–18 (LASGSTSKV) and Lys-32. Asp-121 serves as the catalytic Proton acceptor. The segment at 291–310 (PGEVHKTPRTRPVSSQPRRA) is disordered.

Belongs to the protein kinase superfamily. CAMK Ser/Thr protein kinase family. NIM1 subfamily.

It localises to the nucleus. It carries out the reaction L-seryl-[protein] + ATP = O-phospho-L-seryl-[protein] + ADP + H(+). The enzyme catalyses L-threonyl-[protein] + ATP = O-phospho-L-threonyl-[protein] + ADP + H(+). Serine/threonine-protein kinase which is required for checkpoint-mediated cell cycle arrest and activation of DNA repair in response to the presence of DNA damage or unreplicated DNA. May also negatively regulate cell cycle progression during unperturbed cell cycles. This is Probable serine/threonine-protein kinase CHK1 homolog (CHK1) from Encephalitozoon cuniculi (strain GB-M1) (Microsporidian parasite).